A 261-amino-acid chain; its full sequence is Cell division protein B (261 aa).

Residues Ser-213–Gly-261 are winged-helix-like fold.

In terms of assembly, interacts with CdvA. Interacts with CdvC.

It localises to the cytoplasm. The protein localises to the nucleoid. Its function is as follows. Part of a cell division machinery. The CdvA, CdvB and CdvC proteins polymerize between segregating nucleoids and persist throughout cell division, forming a successively smaller structure during constriction. In Sulfolobus acidocaldarius (strain ATCC 33909 / DSM 639 / JCM 8929 / NBRC 15157 / NCIMB 11770), this protein is Cell division protein B.